Consider the following 1404-residue polypeptide: DNA-directed RNA polymerase subunit beta' (1404 aa).

Residues C70, C72, C85, and C88 each contribute to the Zn(2+) site. Mg(2+)-binding residues include D460, D462, and D464. Residues C814, C888, C895, and C898 each coordinate Zn(2+).

The protein belongs to the RNA polymerase beta' chain family. As to quaternary structure, the RNAP catalytic core consists of 2 alpha, 1 beta, 1 beta' and 1 omega subunit. When a sigma factor is associated with the core the holoenzyme is formed, which can initiate transcription. Requires Mg(2+) as cofactor. The cofactor is Zn(2+).

It carries out the reaction RNA(n) + a ribonucleoside 5'-triphosphate = RNA(n+1) + diphosphate. Functionally, DNA-dependent RNA polymerase catalyzes the transcription of DNA into RNA using the four ribonucleoside triphosphates as substrates. The sequence is that of DNA-directed RNA polymerase subunit beta' from Buchnera aphidicola subsp. Baizongia pistaciae (strain Bp).